The primary structure comprises 275 residues: Dermonecrotic toxin SpeSicTox-betaIIA2iii (275 aa).

Histidine 5 is an active-site residue. 2 residues coordinate Mg(2+): glutamate 25 and aspartate 27. Histidine 41 functions as the Nucleophile in the catalytic mechanism. 2 disulfides stabilise this stretch: cysteine 45–cysteine 51 and cysteine 47–cysteine 190. Aspartate 85 contributes to the Mg(2+) binding site.

The protein belongs to the arthropod phospholipase D family. Class II subfamily. Mg(2+) serves as cofactor. Expressed by the venom gland.

It localises to the secreted. The enzyme catalyses an N-(acyl)-sphingosylphosphocholine = an N-(acyl)-sphingosyl-1,3-cyclic phosphate + choline. The catalysed reaction is an N-(acyl)-sphingosylphosphoethanolamine = an N-(acyl)-sphingosyl-1,3-cyclic phosphate + ethanolamine. It catalyses the reaction a 1-acyl-sn-glycero-3-phosphocholine = a 1-acyl-sn-glycero-2,3-cyclic phosphate + choline. It carries out the reaction a 1-acyl-sn-glycero-3-phosphoethanolamine = a 1-acyl-sn-glycero-2,3-cyclic phosphate + ethanolamine. Dermonecrotic toxins cleave the phosphodiester linkage between the phosphate and headgroup of certain phospholipids (sphingolipid and lysolipid substrates), forming an alcohol (often choline) and a cyclic phosphate. This toxin acts on sphingomyelin (SM). It may also act on ceramide phosphoethanolamine (CPE), lysophosphatidylcholine (LPC) and lysophosphatidylethanolamine (LPE), but not on lysophosphatidylserine (LPS), and lysophosphatidylglycerol (LPG). It acts by transphosphatidylation, releasing exclusively cyclic phosphate products as second products. Induces dermonecrosis, hemolysis, increased vascular permeability, edema, inflammatory response, and platelet aggregation. This is Dermonecrotic toxin SpeSicTox-betaIIA2iii from Sicarius peruensis (Six-eyed sand spider).